The chain runs to 483 residues: Zinc metalloproteinase/disintegrin VMP-II (483 aa).

The first 20 residues, 1 to 20, serve as a signal peptide directing secretion; sequence MIQVLLVTLCLAAFPYQGNS. A propeptide spanning residues 21–191 is cleaved from the precursor; it reads IILESGNVND…KASQLNLTPE (171 aa). The 197-residue stretch at 198–394 folds into the Peptidase M12B domain; it reads RYIELVVVAD…HNPQCMLNEP (197 aa). Residues Glu-201 and Asp-285 each coordinate Ca(2+). 3 disulfide bridges follow: Cys-309–Cys-389, Cys-349–Cys-373, and Cys-351–Cys-356. Zn(2+) is bound at residue His-334. Glu-335 is a catalytic residue. Residues His-338 and His-344 each coordinate Zn(2+). Residues Cys-389 and Asn-392 each coordinate Ca(2+). A propeptide spanning residues 395–414 is cleaved from the precursor; it reads LRTDIVSTPVSGNELWETGE. One can recognise a Disintegrin domain in the interval 402-483; sequence TPVSGNELWE…AGCPRNPFHA (82 aa). 4 cysteine pairs are disulfide-bonded: Cys-425/Cys-448, Cys-439/Cys-445, Cys-444/Cys-469, and Cys-457/Cys-476. The short motif at 461–463 is the Cell attachment site; atypical (KGD) element; sequence KGD.

Belongs to the venom metalloproteinase (M12B) family. P-II subfamily. P-IIe sub-subfamily. As to quaternary structure, heterodimer; disulfide-linked (disintegrin). It depends on Zn(2+) as a cofactor. As to expression, expressed by the venom gland.

It is found in the secreted. Its activity is regulated as follows. Inhibited by EDTA and 1,10-phenanthroline, but not by PMSF. Functionally, has fibrinolytic activity. The recombinant enzyme cleaves both alpha- (FGA) and beta-chains (FGB) of fibrinogen, but not the gamma-chain. The recombinant protein does not produce hemorrhage in mice and does not have effect on ADP- or collagen-stimulated platelet aggregation. Inhibits platelet aggregation induced by ADP, thrombin, platelet-activating factor and collagen. Acts by inhibiting fibrinogen interaction with platelet receptors GPIIb/GPIIIa (ITGA2B/ITGB3). This Agkistrodon piscivorus leucostoma (Western cottonmouth) protein is Zinc metalloproteinase/disintegrin VMP-II.